The primary structure comprises 165 residues: MASEHSFDISAQVDMMEVKNALETSKKELTARYDFKGVTAQIELSEKDKTITILSSSGNKVDALKDIVISKLIKRNIPPVALSESKRESASGGNIKATLKLNDTLDTENSKKITKAIKDAKLKVTATIRGEEVRVSGKSIDDLQECIRLVKALNLELPINFKNLK.

Belongs to the YajQ family.

Nucleotide-binding protein. In Campylobacter curvus (strain 525.92), this protein is Nucleotide-binding protein Ccur92_01650.